We begin with the raw amino-acid sequence, 331 residues long: Ketol-acid reductoisomerase (NADP(+)) (331 aa).

Residues 2-182 (ARMYYDTDAN…GGTRAGILET (181 aa)) form the KARI N-terminal Rossmann domain. Residues 25 to 28 (YGSQ), S51, S53, and 83 to 86 (DEVQ) contribute to the NADP(+) site. H108 is a catalytic residue. G134 contributes to the NADP(+) binding site. The region spanning 183-328 (TFREETETDL…KDLRAMFSWL (146 aa)) is the KARI C-terminal knotted domain. The Mg(2+) site is built by D191, E195, E227, and E231. S252 serves as a coordination point for substrate.

The protein belongs to the ketol-acid reductoisomerase family. It depends on Mg(2+) as a cofactor.

It carries out the reaction (2R)-2,3-dihydroxy-3-methylbutanoate + NADP(+) = (2S)-2-acetolactate + NADPH + H(+). The catalysed reaction is (2R,3R)-2,3-dihydroxy-3-methylpentanoate + NADP(+) = (S)-2-ethyl-2-hydroxy-3-oxobutanoate + NADPH + H(+). It participates in amino-acid biosynthesis; L-isoleucine biosynthesis; L-isoleucine from 2-oxobutanoate: step 2/4. It functions in the pathway amino-acid biosynthesis; L-valine biosynthesis; L-valine from pyruvate: step 2/4. Functionally, involved in the biosynthesis of branched-chain amino acids (BCAA). Catalyzes an alkyl-migration followed by a ketol-acid reduction of (S)-2-acetolactate (S2AL) to yield (R)-2,3-dihydroxy-isovalerate. In the isomerase reaction, S2AL is rearranged via a Mg-dependent methyl migration to produce 3-hydroxy-3-methyl-2-ketobutyrate (HMKB). In the reductase reaction, this 2-ketoacid undergoes a metal-dependent reduction by NADPH to yield (R)-2,3-dihydroxy-isovalerate. The sequence is that of Ketol-acid reductoisomerase (NADP(+)) from Rippkaea orientalis (strain PCC 8801 / RF-1) (Cyanothece sp. (strain PCC 8801)).